The chain runs to 120 residues: Ribonuclease P protein component (120 aa).

This sequence belongs to the RnpA family. Consists of a catalytic RNA component (M1 or rnpB) and a protein subunit.

It catalyses the reaction Endonucleolytic cleavage of RNA, removing 5'-extranucleotides from tRNA precursor.. Functionally, RNaseP catalyzes the removal of the 5'-leader sequence from pre-tRNA to produce the mature 5'-terminus. It can also cleave other RNA substrates such as 4.5S RNA. The protein component plays an auxiliary but essential role in vivo by binding to the 5'-leader sequence and broadening the substrate specificity of the ribozyme. The sequence is that of Ribonuclease P protein component from Latilactobacillus sakei subsp. sakei (strain 23K) (Lactobacillus sakei subsp. sakei).